We begin with the raw amino-acid sequence, 355 residues long: Guanine nucleotide-binding protein alpha-12 subunit (355 aa).

A G-alpha domain is found at 28–355; it reads RQINLLLLGS…EQNLKTLMMQ (328 aa). The G1 motif stretch occupies residues 31-44; it reads NLLLLGSGESGKST. Residues 36–43, 176–182, 201–205, 270–273, and A327 contribute to the GTP site; these read GSGESGKS, LFCRKAT, DVGGQ, and NKND. 2 residues coordinate Mg(2+): S43 and T182. A G2 motif region spans residues 174 to 182; that stretch reads DILFCRKAT. A G3 motif region spans residues 197 to 206; that stretch reads FRFIDVGGQR. The G4 motif stretch occupies residues 266-273; the sequence is ILFMNKND. Positions 325–330 are G5 motif; sequence TTAVDT.

Belongs to the G-alpha family. As to quaternary structure, g proteins are composed of 3 units; alpha, beta and gamma. The alpha chain contains the guanine nucleotide binding site.

In terms of biological role, guanine nucleotide-binding proteins (G proteins) are involved as modulators or transducers in various transmembrane signaling systems. May play a role in resistance to fungal infection in the epidermis by regulating the up-regulation of several antimicrobial peptides of the NLP and CNC families. Upstream of plc-3, tpa-1 and the p38-like pathway, required for the expression of antimicrobial peptide nlp-29 in the epidermis in response to fungal infection or physical injury. The chain is Guanine nucleotide-binding protein alpha-12 subunit (gpa-12) from Caenorhabditis elegans.